The primary structure comprises 352 residues: Peptide chain release factor 1 (352 aa).

At Gln229 the chain carries N5-methylglutamine.

It belongs to the prokaryotic/mitochondrial release factor family. Post-translationally, methylated by PrmC. Methylation increases the termination efficiency of RF1.

The protein resides in the cytoplasm. Peptide chain release factor 1 directs the termination of translation in response to the peptide chain termination codons UAG and UAA. This is Peptide chain release factor 1 from Acidiphilium cryptum (strain JF-5).